The primary structure comprises 622 residues: MTEFDYDELGLVAGLEIHQQLDTATKLFCACPTTRREPAEADRTFTRYLHPTRSELGEIDEAALEESRVEREFEYLAYDTTCLVEEDDEPPHRLDEDALAAALEIGHLLGMDAVDRAHVMRKVVIDGSNTGGFQRSTMVAEGGAIDTSEGPVGIEDLMLEEESAQRIEDREDGVLYSLDRLGIPLVEIGTKPDISSPAQAREAAERIGMLLRSTGKVKRGLGTIRQDVNVSIADGARVEMKGVQSLDDIDDLVREEVRRQVELLDIVDELDARDAAVGKPRDVTDVFADTESGVIRGALDDGGEVHAVPLHGFDGLVGRELQADRRLGTEFSDHATRHGAGGIFHTDELPAYGVTAAEVAALRDAVGAGEDDAVAIVADDPETAAQSIQAVAERAETAMAGVPEETRGANDDGTSKYLRPLPGAARMYPETDVPPVDPDPSAVETPELLTEKVERYQADFDLDAGLAEQVAYGRRWQLFEQQVEAGVDATLAAQTLESTVTELRRDDVPVGRLTDAHFRGVLGLVADGDLAQEGVPELLAALAEQPGSDPAVLAEELGLGSAAEDEVREAVVGVVERNSDQVAAEGMGAFSALMGECMGALRGKADGDLVSEVLREEIQQRS.

This sequence belongs to the GatB/GatE family. GatE subfamily. Heterodimer of GatD and GatE.

It carries out the reaction L-glutamyl-tRNA(Gln) + L-glutamine + ATP + H2O = L-glutaminyl-tRNA(Gln) + L-glutamate + ADP + phosphate + H(+). In terms of biological role, allows the formation of correctly charged Gln-tRNA(Gln) through the transamidation of misacylated Glu-tRNA(Gln) in organisms which lack glutaminyl-tRNA synthetase. The reaction takes place in the presence of glutamine and ATP through an activated gamma-phospho-Glu-tRNA(Gln). The GatDE system is specific for glutamate and does not act on aspartate. The sequence is that of Glutamyl-tRNA(Gln) amidotransferase subunit E from Halobacterium salinarum (strain ATCC 29341 / DSM 671 / R1).